Consider the following 181-residue polypeptide: Small ribosomal subunit protein bS16 (181 aa).

The tract at residues 150–181 (KKAAEEAAKAAAEAPAEEAAPAEETATEAAAE) is disordered. A compositionally biased stretch (low complexity) spans 158–181 (KAAAEAPAEEAAPAEETATEAAAE).

This sequence belongs to the bacterial ribosomal protein bS16 family.

The protein is Small ribosomal subunit protein bS16 of Bacteroides fragilis (strain YCH46).